Here is a 352-residue protein sequence, read N- to C-terminus: UDP-3-O-acylglucosamine N-acyltransferase (352 aa).

Catalysis depends on H257, which acts as the Proton acceptor.

The protein belongs to the transferase hexapeptide repeat family. LpxD subfamily. As to quaternary structure, homotrimer.

The catalysed reaction is a UDP-3-O-[(3R)-3-hydroxyacyl]-alpha-D-glucosamine + a (3R)-hydroxyacyl-[ACP] = a UDP-2-N,3-O-bis[(3R)-3-hydroxyacyl]-alpha-D-glucosamine + holo-[ACP] + H(+). It participates in bacterial outer membrane biogenesis; LPS lipid A biosynthesis. Functionally, catalyzes the N-acylation of UDP-3-O-acylglucosamine using 3-hydroxyacyl-ACP as the acyl donor. Is involved in the biosynthesis of lipid A, a phosphorylated glycolipid that anchors the lipopolysaccharide to the outer membrane of the cell. This is UDP-3-O-acylglucosamine N-acyltransferase from Methylobacterium nodulans (strain LMG 21967 / CNCM I-2342 / ORS 2060).